The sequence spans 219 residues: Probable GTP-binding protein EngB (219 aa).

The EngB-type G domain maps to 24–207 (VQPEIAFAGR…HALIESWLRP (184 aa)). GTP-binding positions include 32–39 (GRSNAGKS), 59–63 (GRTQH), 81–84 (DLPG), 148–151 (TKCD), and 185–188 (LFSA). Residues serine 39 and threonine 61 each coordinate Mg(2+).

This sequence belongs to the TRAFAC class TrmE-Era-EngA-EngB-Septin-like GTPase superfamily. EngB GTPase family. It depends on Mg(2+) as a cofactor.

In terms of biological role, necessary for normal cell division and for the maintenance of normal septation. This Burkholderia thailandensis (strain ATCC 700388 / DSM 13276 / CCUG 48851 / CIP 106301 / E264) protein is Probable GTP-binding protein EngB.